The following is a 550-amino-acid chain: CTP synthase (550 aa).

The interval M1–L272 is amidoligase domain. S14 is a binding site for CTP. S14 serves as a coordination point for UTP. An ATP-binding site is contributed by S15 to L20. L-glutamine is bound at residue Y55. Position 72 (D72) interacts with ATP. Mg(2+) contacts are provided by D72 and E146. CTP is bound by residues D153–E155, K193–Q198, and K229. UTP contacts are provided by residues K193–Q198 and K229. Residues T297–Q550 enclose the Glutamine amidotransferase type-1 domain. G359 contributes to the L-glutamine binding site. C386 acts as the Nucleophile; for glutamine hydrolysis in catalysis. L-glutamine contacts are provided by residues L387–Q390, E410, and R478. Residues H523 and E525 contribute to the active site.

Belongs to the CTP synthase family. In terms of assembly, homotetramer.

It catalyses the reaction UTP + L-glutamine + ATP + H2O = CTP + L-glutamate + ADP + phosphate + 2 H(+). The catalysed reaction is L-glutamine + H2O = L-glutamate + NH4(+). The enzyme catalyses UTP + NH4(+) + ATP = CTP + ADP + phosphate + 2 H(+). The protein operates within pyrimidine metabolism; CTP biosynthesis via de novo pathway; CTP from UDP: step 2/2. Allosterically activated by GTP, when glutamine is the substrate; GTP has no effect on the reaction when ammonia is the substrate. The allosteric effector GTP functions by stabilizing the protein conformation that binds the tetrahedral intermediate(s) formed during glutamine hydrolysis. Inhibited by the product CTP, via allosteric rather than competitive inhibition. Its function is as follows. Catalyzes the ATP-dependent amination of UTP to CTP with either L-glutamine or ammonia as the source of nitrogen. Regulates intracellular CTP levels through interactions with the four ribonucleotide triphosphates. This chain is CTP synthase, found in Lawsonia intracellularis (strain PHE/MN1-00).